A 248-amino-acid polypeptide reads, in one-letter code: PF03932 family protein CutC (248 aa).

The protein belongs to the CutC family. As to quaternary structure, homodimer.

Its subcellular location is the cytoplasm. The polypeptide is PF03932 family protein CutC (Escherichia coli O81 (strain ED1a)).